A 352-amino-acid chain; its full sequence is Chorismate synthase (352 aa).

Position 48 (R48) interacts with NADP(+). FMN is bound by residues 125-127 (RSS), 237-238 (NA), G278, 293-297 (KPTSS), and R319.

The protein belongs to the chorismate synthase family. In terms of assembly, homotetramer. The cofactor is FMNH2.

The catalysed reaction is 5-O-(1-carboxyvinyl)-3-phosphoshikimate = chorismate + phosphate. It participates in metabolic intermediate biosynthesis; chorismate biosynthesis; chorismate from D-erythrose 4-phosphate and phosphoenolpyruvate: step 7/7. Its function is as follows. Catalyzes the anti-1,4-elimination of the C-3 phosphate and the C-6 proR hydrogen from 5-enolpyruvylshikimate-3-phosphate (EPSP) to yield chorismate, which is the branch point compound that serves as the starting substrate for the three terminal pathways of aromatic amino acid biosynthesis. This reaction introduces a second double bond into the aromatic ring system. The polypeptide is Chorismate synthase (Francisella tularensis subsp. mediasiatica (strain FSC147)).